We begin with the raw amino-acid sequence, 306 residues long: Pantothenate kinase (306 aa).

An ATP-binding site is contributed by 91-98 (GSVAVGKS).

This sequence belongs to the prokaryotic pantothenate kinase family.

It is found in the cytoplasm. It catalyses the reaction (R)-pantothenate + ATP = (R)-4'-phosphopantothenate + ADP + H(+). It participates in cofactor biosynthesis; coenzyme A biosynthesis; CoA from (R)-pantothenate: step 1/5. The chain is Pantothenate kinase from Streptococcus mutans serotype c (strain ATCC 700610 / UA159).